The sequence spans 150 residues: D-aminoacyl-tRNA deacylase (150 aa).

Residues 136–137 (GP) carry the Gly-cisPro motif, important for rejection of L-amino acids motif.

The protein belongs to the DTD family. In terms of assembly, homodimer.

It is found in the cytoplasm. It catalyses the reaction glycyl-tRNA(Ala) + H2O = tRNA(Ala) + glycine + H(+). It carries out the reaction a D-aminoacyl-tRNA + H2O = a tRNA + a D-alpha-amino acid + H(+). In terms of biological role, an aminoacyl-tRNA editing enzyme that deacylates mischarged D-aminoacyl-tRNAs. Also deacylates mischarged glycyl-tRNA(Ala), protecting cells against glycine mischarging by AlaRS. Acts via tRNA-based rather than protein-based catalysis; rejects L-amino acids rather than detecting D-amino acids in the active site. By recycling D-aminoacyl-tRNA to D-amino acids and free tRNA molecules, this enzyme counteracts the toxicity associated with the formation of D-aminoacyl-tRNA entities in vivo and helps enforce protein L-homochirality. This chain is D-aminoacyl-tRNA deacylase, found in Staphylococcus aureus (strain MRSA252).